Here is an 86-residue protein sequence, read N- to C-terminus: UPF0386 protein RC1_1783 (86 aa).

The protein belongs to the UPF0386 family.

The polypeptide is UPF0386 protein RC1_1783 (Rhodospirillum centenum (strain ATCC 51521 / SW)).